The sequence spans 492 residues: Catalase-1 (492 aa).

Catalysis depends on residues His65 and Asn138. Tyr348 contacts heme.

Belongs to the catalase family. In terms of assembly, homotetramer and heterotetramer. At least six or seven isozymes are produced from a mixture of 3 gene products. Interacts with NCA1. Interacts with LSD1. It depends on heme as a cofactor.

The protein localises to the cytoplasm. It carries out the reaction 2 H2O2 = O2 + 2 H2O. In terms of biological role, occurs in almost all aerobically respiring organisms and serves to protect cells from the toxic effects of hydrogen peroxide. This Arabidopsis thaliana (Mouse-ear cress) protein is Catalase-1 (CAT1).